Here is a 252-residue protein sequence, read N- to C-terminus: CLAVATA3/ESR (CLE)-related protein 4A-1 (252 aa).

The N-terminal stretch at 1 to 21 (MAKNAMLCLLILRVVLALAFA) is a signal peptide. Residues 21 to 83 (ATNKKGDEEP…SNQLPNNNWM (63 aa)) form a required for secretion from the host cytoplasm to the host apoplasm region. An N-linked (GlcNAc...) asparagine glycan is attached at asparagine 32. Positions 116–252 (RKTGMHSQRH…APAGPDPIHH (137 aa)) are disordered. Composition is skewed to basic and acidic residues over residues 125-137 (HHEETTLEQEKRV) and 144-242 (PIHH…EKRG). The stretch at 127 to 135 (EETTLEQEK) is one A-1 repeat. The interval 127–219 (EETTLEQEKR…HEETTLEQEK (93 aa)) is 6 X approximate repeat A. The CLE-1 repeat unit spans residues 136–147 (RVAGAGPDPIHH). Residues 136–252 (RVAGAGPDPI…APAGPDPIHH (117 aa)) are 6 X approximate repeat CLE. An A-2 repeat occupies 148–156 (QDTTLEQEK). One copy of the CLE-2 repeat lies at 157-168 (RAVPAGPDPKHH). The A-3 repeat unit spans residues 169–177 (EETTLEQEK). Residues 178 to 189 (RAVPAGPDPKHH) form a CLE-3 repeat. An A-4 repeat occupies 190–198 (EETTLEQEK). The stretch at 199–210 (RAVPAGPDPKHH) is one CLE-4 repeat. An A-5 repeat occupies 211–219 (EETTLEQEK). The CLE-5 repeat unit spans residues 220–231 (RAVPAGPDPKHH). One copy of the A-6 repeat lies at 232 to 240 (EETTFEQEK). One copy of the CLE-6 repeat lies at 241 to 252 (RGAPAGPDPIHH).

It belongs to the CLV3/ESR signal peptide family. Highly expressed exclusively within the dorsal esophageal gland cell during syncytium formation in host plants.

Its subcellular location is the secreted. It is found in the host cytoplasm. The protein localises to the host extracellular space. The protein resides in the extracellular space. It localises to the apoplast. Its function is as follows. Mimics host plant CLE extracellular signal peptides that regulate cell fate. May play a role in the differentiation or division of feeding cells (syncytia) induced in plant roots during infection. This Globodera rostochiensis (Golden nematode worm) protein is CLAVATA3/ESR (CLE)-related protein 4A-1 (CLE-4A-1).